Reading from the N-terminus, the 406-residue chain is Acetylornithine aminotransferase (406 aa).

Residues 108-109 (GA) and Phe-141 contribute to the pyridoxal 5'-phosphate site. Arg-144 provides a ligand contact to N(2)-acetyl-L-ornithine. A pyridoxal 5'-phosphate-binding site is contributed by 226 to 229 (DEVQ). Lys-255 is subject to N6-(pyridoxal phosphate)lysine. A N(2)-acetyl-L-ornithine-binding site is contributed by Thr-283. Thr-284 lines the pyridoxal 5'-phosphate pocket.

Belongs to the class-III pyridoxal-phosphate-dependent aminotransferase family. ArgD subfamily. Homodimer. Pyridoxal 5'-phosphate serves as cofactor.

The protein localises to the cytoplasm. The catalysed reaction is N(2)-acetyl-L-ornithine + 2-oxoglutarate = N-acetyl-L-glutamate 5-semialdehyde + L-glutamate. It participates in amino-acid biosynthesis; L-arginine biosynthesis; N(2)-acetyl-L-ornithine from L-glutamate: step 4/4. The sequence is that of Acetylornithine aminotransferase from Pseudomonas putida (strain ATCC 47054 / DSM 6125 / CFBP 8728 / NCIMB 11950 / KT2440).